The sequence spans 876 residues: Alanine--tRNA ligase (876 aa).

Residues His-563, His-567, Cys-665, and His-669 each contribute to the Zn(2+) site.

Belongs to the class-II aminoacyl-tRNA synthetase family. Zn(2+) is required as a cofactor.

The protein localises to the cytoplasm. The enzyme catalyses tRNA(Ala) + L-alanine + ATP = L-alanyl-tRNA(Ala) + AMP + diphosphate. Functionally, catalyzes the attachment of alanine to tRNA(Ala) in a two-step reaction: alanine is first activated by ATP to form Ala-AMP and then transferred to the acceptor end of tRNA(Ala). Also edits incorrectly charged Ser-tRNA(Ala) and Gly-tRNA(Ala) via its editing domain. This Shouchella clausii (strain KSM-K16) (Alkalihalobacillus clausii) protein is Alanine--tRNA ligase.